We begin with the raw amino-acid sequence, 187 residues long: 5-formyltetrahydrofolate cyclo-ligase (187 aa).

ATP contacts are provided by residues 6-10 (RQQIR), 139-146 (GMGGGFYD), and Asp-178.

Belongs to the 5-formyltetrahydrofolate cyclo-ligase family.

The catalysed reaction is (6S)-5-formyl-5,6,7,8-tetrahydrofolate + ATP = (6R)-5,10-methenyltetrahydrofolate + ADP + phosphate. Its pathway is one-carbon metabolism; tetrahydrofolate interconversion. Involved in the removal of 5-formyltetrahydrofolate. In vitro, it is a potent inhibitor of various folate-dependent enzymes in the C1 metabolism network and in vivo it might function as a folate storage. 5-formyltetrahydrofolate is also used as an antifolate rescue agent in cancer chemotherapy. Catalyzes the irreversible ATP-dependent transformation of 5-formyltetrahydrofolate (5-CHO-THF) to form 5,10-methenyltetrahydrofolate (5,10-CH=THF). The reverse reaction is catalyzed by the serine hydroxymethyltransferase GlyA (SHMT). The chain is 5-formyltetrahydrofolate cyclo-ligase from Haemophilus influenzae (strain ATCC 51907 / DSM 11121 / KW20 / Rd).